The sequence spans 219 residues: Redox-sensing transcriptional repressor Rex (219 aa).

The segment at residues 17-56 (LYYRIFKRFHRENIVKTSSKQIAEAIGIDPATVRRDFSYF) is a DNA-binding region (H-T-H motif). Residue 91 to 96 (GVGNIG) participates in NAD(+) binding.

Belongs to the transcriptional regulatory Rex family. As to quaternary structure, homodimer.

It is found in the cytoplasm. In terms of biological role, modulates transcription in response to changes in cellular NADH/NAD(+) redox state. In Streptococcus thermophilus (strain ATCC BAA-491 / LMD-9), this protein is Redox-sensing transcriptional repressor Rex.